Consider the following 696-residue polypeptide: MAPFPDEVDVFTGPHWRMKQLVGLYCEKLSQTNFSNNNDFRSFLQSLCATFKEFKMHEQIENEYIIGLLQQRSCNVYNVHSDNKLSEMLSLFEKGLRSVKSENEQLNYAQQLKERLEAFTQDFLPHMKEEEEVFQPMLMQYFTYEELKDIKKQVIAQHSSQQRWDCAAEVLKGLSLWSQAEELHKAFKYADHEKTDDELEKELCSTHISQLPTEILLCLFRYLGPEDLCHCGQVCSAWSDLAKTGSLWRHLYPVRWARGDYYRGPPDDVNQEPDEEWVKSLQDEGKAYQEWDEDADVDESDASCEDSLAISAAQREKKLLNGMIQNLLPAVGSSVRSIVLAYSSTVSSKMVRQILSLCPNLTHLDLTQTDVTDSAFDSWSSLWACLSLEHLDLSGCEKLTDRTLKKLSLGLGDLASPTCSEKRSDRRAKLLKSPPSPISLLDKRSLRPTGHSRQVLIFKQWPGKLGSAPCSPTRVWVLDASELADIEDAAEWNRRRGVSTPEVRGFVETQPGGLSCCCRRRRGGFRTGFSTSYWQQQYGLGEAGCGHSTCCTGETALRTLGGLQYESYTTRGSAGAEFRTKCSSGGQLCLECDNRTDPSDGRRSLRFLSLSGCYQVTDLGLRALSQRGGLPLLEHLNLSGCLLITEVGLQELVSACPALNDEHFYYCDNINGPHADTASGCQNLQCGFRVCCRSGE.

Positions 1 to 159 (MAPFPDEVDV…IKKQVIAQHS (159 aa)) are hemerythrin-like. The Fe(3+) site is built by H15, H57, E58, E61, H80, H126, and E130. Residues 205–251 (STHISQLPTEILLCLFRYLGPEDLCHCGQVCSAWSDLAKTGSLWRHL) enclose the F-box domain. LRR repeat units lie at residues 343-367 (SSTV…LDLT), 368-395 (QTDV…DLSG), 396-421 (CEKL…TCSE), 582-612 (CSSG…SLSG), 613-640 (CYQV…NLSG), and 641-666 (CLLI…HFYY). C667, C681, C691, and C692 together coordinate [2Fe-2S] cluster.

Part of a SCF (SKP1-cullin-F-box) protein ligase complex. The cofactor is [2Fe-2S] cluster. Ubiquitinated upon iron and oxygen depletion, leading to its degradation by the proteasome. Ubiquitination is regulated by the hemerythrin-like region that acts as an oxygen and iron sensor.

It localises to the cytoplasm. It is found in the perinuclear region. The protein resides in the nucleus. Its pathway is protein modification; protein ubiquitination. Its function is as follows. Component of some SCF (SKP1-cullin-F-box) protein ligase complex that plays a central role in iron homeostasis by promoting the ubiquitination and subsequent degradation of ireb2/irp2. Upon high iron and oxygen level, it specifically recognizes and binds ireb2/irp2, promoting its ubiquitination and degradation by the proteasome. This Salmo salar (Atlantic salmon) protein is F-box/LRR-repeat protein 5 (fbxl5).